The sequence spans 355 residues: UDP-galactose translocator 1 (355 aa).

The interval 1–36 is disordered; sequence MKFQNVHISHQDEDKEKLLPNDKDVEKADESPSSSR. A compositionally biased stretch (basic and acidic residues) spans 9 to 30; the sequence is SHQDEDKEKLLPNDKDVEKADE. Helical transmembrane passes span 40–60, 177–197, 211–231, 282–302, 309–329, and 330–350; these read VFKCYVIASMTFIWTAYTLTI, WMAITLLMFGVAFVQMNNVSA, IVGLSAVLATCVTAGFAGVYF, VWAVVILLGVGGLYISLVMRY, SMASAVSIILVVVLSMLIFPD, and IFIGMYFVLGTICVVLAVLLY.

Belongs to the nucleotide-sugar transporter family. SLC35A subfamily.

The protein resides in the membrane. The protein localises to the cytoplasmic granule membrane. The sequence is that of UDP-galactose translocator 1 (ugtp-1) from Caenorhabditis elegans.